The following is a 142-amino-acid chain: Large ribosomal subunit protein uL13 (142 aa).

Belongs to the universal ribosomal protein uL13 family. In terms of assembly, part of the 50S ribosomal subunit.

Its function is as follows. This protein is one of the early assembly proteins of the 50S ribosomal subunit, although it is not seen to bind rRNA by itself. It is important during the early stages of 50S assembly. The chain is Large ribosomal subunit protein uL13 from Xanthomonas oryzae pv. oryzae (strain MAFF 311018).